The primary structure comprises 324 residues: Protoheme IX farnesyltransferase (324 aa).

9 consecutive transmembrane segments (helical) span residues 31–51, 56–76, 105–125, 126–146, 153–173, 181–201, 214–234, 238–258, and 285–305; these read LILL…SGQV, FLTT…INCI, VFAA…ANLL, SACL…YWLK, IVIG…AVTG, VLFA…AMMI, PVVN…LLLL, LLLV…AIVL, and FSIL…LPWT.

This sequence belongs to the UbiA prenyltransferase family. Protoheme IX farnesyltransferase subfamily.

The protein resides in the cell inner membrane. It catalyses the reaction heme b + (2E,6E)-farnesyl diphosphate + H2O = Fe(II)-heme o + diphosphate. Its pathway is porphyrin-containing compound metabolism; heme O biosynthesis; heme O from protoheme: step 1/1. Converts heme B (protoheme IX) to heme O by substitution of the vinyl group on carbon 2 of heme B porphyrin ring with a hydroxyethyl farnesyl side group. In Acaryochloris marina (strain MBIC 11017), this protein is Protoheme IX farnesyltransferase.